The chain runs to 343 residues: Inositol 2-dehydrogenase (343 aa).

It belongs to the Gfo/Idh/MocA family. In terms of assembly, homotetramer.

The catalysed reaction is myo-inositol + NAD(+) = scyllo-inosose + NADH + H(+). Functionally, involved in the oxidation of myo-inositol (MI) to 2-keto-myo-inositol (2KMI or 2-inosose). This Streptomyces avermitilis (strain ATCC 31267 / DSM 46492 / JCM 5070 / NBRC 14893 / NCIMB 12804 / NRRL 8165 / MA-4680) protein is Inositol 2-dehydrogenase.